A 336-amino-acid chain; its full sequence is Eukaryotic translation initiation factor 3 subunit H (336 aa).

The MPN domain maps to 21–154 (VQCDGLAAMK…LKAYRLTPQA (134 aa)).

This sequence belongs to the eIF-3 subunit H family. As to quaternary structure, component of the eukaryotic translation initiation factor 3 (eIF-3) complex.

It localises to the cytoplasm. Its function is as follows. Component of the eukaryotic translation initiation factor 3 (eIF-3) complex, which is involved in protein synthesis of a specialized repertoire of mRNAs and, together with other initiation factors, stimulates binding of mRNA and methionyl-tRNAi to the 40S ribosome. The eIF-3 complex specifically targets and initiates translation of a subset of mRNAs involved in cell proliferation. This chain is Eukaryotic translation initiation factor 3 subunit H, found in Aedes aegypti (Yellowfever mosquito).